The sequence spans 623 residues: MPHSDELDAGDVLAVENLNIAFMQEQHKIAAVRNLSFSLQRGETLAIVGESGSGKSVTALALMRLLEQAGGLVQCDKMLLQRRSREVIELSEQSAAQMRHVRGADMAMIFQEPMTSLNPVFTVGEQIAESIRLHQNASREEAMVEAKRMLDQVRIPEAQTILSRYPHQLSGGMRQRVMIAMALSCRPAVLIADEPTTALDVTIQAQILQLIKVLQKEMSMGVIFITHDMGVVAEIADRVLVMYQGEAVETGSVEQIFHAPQHPYTRALLAAVPQLGAMKGLDYPRRFPLISLEHPAKQEPPIEQKTVVDGEPVLRVRNLVSRFPLRSGLLNRVTREVHAVEKVSFDLWPGETLSLVGESGSGKSTTGWALLRLVESQGGEIIFNGQRIDTLSPGKLQALRRDIQFIFQDPYASLDPRQTIGDSILEPLRVHGLLPGKEAAARVAWLLERVGLLPEHAWRYPHEFSGGQRQRICIARALALNPKVIIADEAVSALDVSIRGQIINLLLDLQRDFGIAYLFISHDMAVVERISHRVAAMYLGQIVEIGPRRAVFENPQHPYTRKLLAAVPVAEPSRQRPQRVLLSDDLPSNIHLRGEEVAAVSLQCVGPGHYVAQPQSEYAFMRR.

ABC transporter domains lie at Val15–Leu269 and Leu314–Leu564. Residues Gly49 to Ser56 and Gly357 to Ser364 each bind ATP.

It belongs to the ABC transporter superfamily. Glutathione importer (TC 3.A.1.5.11) family. As to quaternary structure, the complex is composed of two ATP-binding proteins (GsiA), two transmembrane proteins (GsiC and GsiD) and a solute-binding protein (GsiB).

The protein localises to the cell inner membrane. The enzyme catalyses glutathione(out) + ATP + H2O = glutathione(in) + ADP + phosphate + H(+). Functionally, part of the ABC transporter complex GsiABCD involved in glutathione import. Responsible for energy coupling to the transport system. In Escherichia coli O1:K1 / APEC, this protein is Glutathione import ATP-binding protein GsiA.